A 400-amino-acid chain; its full sequence is S-adenosylmethionine decarboxylase proenzyme (400 aa).

Residues glutamate 18 and glutamate 21 contribute to the active site. Serine 78 functions as the Schiff-base intermediate with substrate; via pyruvic acid in the catalytic mechanism. Serine 78 is subject to Pyruvic acid (Ser); by autocatalysis. The active-site Proton donor; for catalytic activity is cysteine 92. Catalysis depends on proton acceptor; for processing activity residues serine 243 and histidine 256.

Belongs to the eukaryotic AdoMetDC family. Pyruvate is required as a cofactor. Is synthesized initially as an inactive proenzyme. Formation of the active enzyme involves a self-maturation process in which the active site pyruvoyl group is generated from an internal serine residue via an autocatalytic post-translational modification. Two non-identical subunits are generated from the proenzyme in this reaction, and the pyruvate is formed at the N-terminus of the alpha chain, which is derived from the carboxyl end of the proenzyme. The post-translation cleavage follows an unusual pathway, termed non-hydrolytic serinolysis, in which the side chain hydroxyl group of the serine supplies its oxygen atom to form the C-terminus of the beta chain, while the remainder of the serine residue undergoes an oxidative deamination to produce ammonia and the pyruvoyl group blocking the N-terminus of the alpha chain.

It carries out the reaction S-adenosyl-L-methionine + H(+) = S-adenosyl 3-(methylsulfanyl)propylamine + CO2. It functions in the pathway amine and polyamine biosynthesis; S-adenosylmethioninamine biosynthesis; S-adenosylmethioninamine from S-adenosyl-L-methionine: step 1/1. In Zea mays (Maize), this protein is S-adenosylmethionine decarboxylase proenzyme (SAMDC).